We begin with the raw amino-acid sequence, 491 residues long: UDP-N-acetylmuramate--L-alanine ligase (491 aa).

126–132 (GTHGKTT) is a binding site for ATP.

It belongs to the MurCDEF family.

The protein resides in the cytoplasm. The catalysed reaction is UDP-N-acetyl-alpha-D-muramate + L-alanine + ATP = UDP-N-acetyl-alpha-D-muramoyl-L-alanine + ADP + phosphate + H(+). Its pathway is cell wall biogenesis; peptidoglycan biosynthesis. Its function is as follows. Cell wall formation. This is UDP-N-acetylmuramate--L-alanine ligase from Escherichia coli O7:K1 (strain IAI39 / ExPEC).